A 317-amino-acid chain; its full sequence is Methionyl-tRNA formyltransferase (317 aa).

112–115 contacts (6S)-5,6,7,8-tetrahydrofolate; the sequence is SILP.

The protein belongs to the Fmt family.

It catalyses the reaction L-methionyl-tRNA(fMet) + (6R)-10-formyltetrahydrofolate = N-formyl-L-methionyl-tRNA(fMet) + (6S)-5,6,7,8-tetrahydrofolate + H(+). In terms of biological role, attaches a formyl group to the free amino group of methionyl-tRNA(fMet). The formyl group appears to play a dual role in the initiator identity of N-formylmethionyl-tRNA by promoting its recognition by IF2 and preventing the misappropriation of this tRNA by the elongation apparatus. The polypeptide is Methionyl-tRNA formyltransferase (Actinobacillus succinogenes (strain ATCC 55618 / DSM 22257 / CCUG 43843 / 130Z)).